The chain runs to 149 residues: Transcriptional regulator MraZ (149 aa).

2 consecutive SpoVT-AbrB domains span residues 7–54 (KYVN…GISH) and 83–126 (AVQL…QPQN).

This sequence belongs to the MraZ family. In terms of assembly, forms oligomers.

Its subcellular location is the cytoplasm. The protein localises to the nucleoid. The sequence is that of Transcriptional regulator MraZ from Rickettsia felis (strain ATCC VR-1525 / URRWXCal2) (Rickettsia azadi).